The chain runs to 651 residues: MEGPPGDLKHLFIEWLQEAAINATKKGTKAAILYNKALGSVRNYPLPINDPKTLKSVQFVGDKTCIHLSKKLEEYCKLNNFELPVAFGGLINGGVGEKRKHEVSDTSNLPDAKPKKQRKQKQYIPRKRSGGYAILLALYFGDKKKTGLTKEEIIQRATPYSDKSFKSNPSANEFYSAWSSIKSLQTHDLVDSSGRSSKSYFLTEEGYELAKQLKDAEGFESSPITNHIADLSFDNQVRVTPDSSYSKISQQLDSSPLMKTKNNKDRYGLGPSRLSSTRERILDLSSSPRLISSPLKPKDFVLRESLSSHNSTRPLQDRESISKAEDGINTKTKARLVHDASKRIYDGTNYDIWVPGEFEIILIIDNREIRSQRDRDFFQTRLTSLKVECDVRPLSVGDVVWTAKHKKTGREVILNYICERKRLDDLVSSIKDGRFQEQKNRLKKSGMKQFYYLVEDVVTSDMNKFGDMSDAIQTAMSMTMTISNFYLKRFKSIEDTIAFLASLTQVIKDQFAKNKTNLLVLKARSIKNQAEYSSLIAKFKEKFENRSTSYECAHLFSTFQDSMGKTGMMTVKETFILMLMGIRGVSLERAVAIQNRFKTPKNLIEFFFVENNHLSELDKKQLMMDVFKNEIGNKKIGKVLSEKIYDVWGCV.

Residues 99–124 (RKHEVSDTSNLPDAKPKKQRKQKQYI) form a disordered region. The span at 115 to 124 (KKQRKQKQYI) shows a compositional bias: basic residues. The ERCC4 domain occupies 361–458 (ILIIDNREIR…QFYYLVEDVV (98 aa)).

Belongs to the XPF family. As to quaternary structure, interacts with EME1. Requires Mg(2+) as cofactor.

Its subcellular location is the nucleus. In terms of biological role, interacts with EME1 to form a DNA structure-specific endonuclease with substrate preference for branched DNA structures with a 5'-end at the branch nick. Typical substrates include 3'-flap structures, D-loops, replication forks and nicked Holliday junctions. May be required in mitosis for the processing of stalled or collapsed replication fork intermediates. May be required in meiosis for the repair of meiosis-specific double strand breaks subsequent to single-end invasion (SEI). The polypeptide is Crossover junction endonuclease MUS81 (MUS81) (Debaryomyces hansenii (strain ATCC 36239 / CBS 767 / BCRC 21394 / JCM 1990 / NBRC 0083 / IGC 2968) (Yeast)).